A 381-amino-acid chain; its full sequence is Alkanesulfonate monooxygenase (381 aa).

This sequence belongs to the SsuD family. As to quaternary structure, homotetramer.

It catalyses the reaction an alkanesulfonate + FMNH2 + O2 = an aldehyde + FMN + sulfite + H2O + 2 H(+). In terms of biological role, catalyzes the desulfonation of aliphatic sulfonates. The polypeptide is Alkanesulfonate monooxygenase (Escherichia coli O6:H1 (strain CFT073 / ATCC 700928 / UPEC)).